A 570-amino-acid polypeptide reads, in one-letter code: Dual specificity testis-specific protein kinase 2 (570 aa).

The 256-residue stretch at 58–313 (DFTREKIGSG…EIGKTLKEIM (256 aa)) folds into the Protein kinase domain. ATP is bound by residues 64–72 (IGSGFFSEV) and Lys87. Asp176 functions as the Proton acceptor in the catalytic mechanism. Ser219 carries the phosphoserine; by autocatalysis modification. Residues 316–327 (LPEEELERDRKL) show a composition bias toward basic and acidic residues. The tract at residues 316-357 (LPEEELERDRKLQPTAKGPLEKVPGGKRLSSLDDKIPHKSPR) is disordered. 3 positions are modified to phosphoserine: Ser369, Ser456, and Ser460. A disordered region spans residues 511–530 (AMDCSNPQEENGFGPRLKGT).

Belongs to the protein kinase superfamily. TKL Ser/Thr protein kinase family. Requires Mg(2+) as cofactor. Mn(2+) is required as a cofactor.

It localises to the nucleus. It carries out the reaction L-seryl-[protein] + ATP = O-phospho-L-seryl-[protein] + ADP + H(+). The enzyme catalyses L-threonyl-[protein] + ATP = O-phospho-L-threonyl-[protein] + ADP + H(+). The catalysed reaction is L-tyrosyl-[protein] + ATP = O-phospho-L-tyrosyl-[protein] + ADP + H(+). Activated by autophosphorylation on Ser-219. Functionally, dual specificity protein kinase activity catalyzing autophosphorylation and phosphorylation of exogenous substrates on both serine/threonine and tyrosine residues. Phosphorylates cofilin at 'Ser-3'. May play an important role in spermatogenesis. The chain is Dual specificity testis-specific protein kinase 2 (Tesk2) from Mus musculus (Mouse).